A 576-amino-acid polypeptide reads, in one-letter code: DNA mismatch repair protein MutL (576 aa).

The protein belongs to the DNA mismatch repair MutL/HexB family.

In terms of biological role, this protein is involved in the repair of mismatches in DNA. It is required for dam-dependent methyl-directed DNA mismatch repair. May act as a 'molecular matchmaker', a protein that promotes the formation of a stable complex between two or more DNA-binding proteins in an ATP-dependent manner without itself being part of a final effector complex. This chain is DNA mismatch repair protein MutL, found in Chlamydia trachomatis serovar L2 (strain ATCC VR-902B / DSM 19102 / 434/Bu).